A 361-amino-acid chain; its full sequence is Phospho-N-acetylmuramoyl-pentapeptide-transferase (361 aa).

The next 10 membrane-spanning stretches (helical) occupy residues 28–48 (LAII…IKFL), 74–94 (TMGG…LADL), 99–119 (IWIT…DDYA), 133–153 (SKLL…EYTD), 168–188 (LSLD…VGSS), 203–223 (VPIA…GNLI), 236–256 (TGEL…FLWF), 263–283 (VFMG…ISVI), 288–308 (VVLS…ILQV), and 338–358 (KVVI…LSSL).

The protein belongs to the glycosyltransferase 4 family. MraY subfamily. It depends on Mg(2+) as a cofactor.

The protein localises to the cell inner membrane. It catalyses the reaction UDP-N-acetyl-alpha-D-muramoyl-L-alanyl-gamma-D-glutamyl-meso-2,6-diaminopimeloyl-D-alanyl-D-alanine + di-trans,octa-cis-undecaprenyl phosphate = di-trans,octa-cis-undecaprenyl diphospho-N-acetyl-alpha-D-muramoyl-L-alanyl-D-glutamyl-meso-2,6-diaminopimeloyl-D-alanyl-D-alanine + UMP. Its pathway is cell wall biogenesis; peptidoglycan biosynthesis. Its function is as follows. Catalyzes the initial step of the lipid cycle reactions in the biosynthesis of the cell wall peptidoglycan: transfers peptidoglycan precursor phospho-MurNAc-pentapeptide from UDP-MurNAc-pentapeptide onto the lipid carrier undecaprenyl phosphate, yielding undecaprenyl-pyrophosphoryl-MurNAc-pentapeptide, known as lipid I. The protein is Phospho-N-acetylmuramoyl-pentapeptide-transferase of Rickettsia canadensis (strain McKiel).